Consider the following 227-residue polypeptide: Orotidine 5'-phosphate decarboxylase (227 aa).

Substrate contacts are provided by residues aspartate 8, lysine 30, 58 to 67, threonine 117, arginine 177, glutamine 186, glycine 206, and arginine 207; that span reads DLKLYDIPNT. Catalysis depends on lysine 60, which acts as the Proton donor.

Belongs to the OMP decarboxylase family. Type 1 subfamily. Homodimer.

The enzyme catalyses orotidine 5'-phosphate + H(+) = UMP + CO2. It functions in the pathway pyrimidine metabolism; UMP biosynthesis via de novo pathway; UMP from orotate: step 2/2. Catalyzes the decarboxylation of orotidine 5'-monophosphate (OMP) to uridine 5'-monophosphate (UMP). The polypeptide is Orotidine 5'-phosphate decarboxylase (Campylobacter lari (strain RM2100 / D67 / ATCC BAA-1060)).